The chain runs to 246 residues: 3-deoxy-manno-octulosonate cytidylyltransferase (246 aa).

The protein belongs to the KdsB family.

Its subcellular location is the cytoplasm. It catalyses the reaction 3-deoxy-alpha-D-manno-oct-2-ulosonate + CTP = CMP-3-deoxy-beta-D-manno-octulosonate + diphosphate. The protein operates within nucleotide-sugar biosynthesis; CMP-3-deoxy-D-manno-octulosonate biosynthesis; CMP-3-deoxy-D-manno-octulosonate from 3-deoxy-D-manno-octulosonate and CTP: step 1/1. It participates in bacterial outer membrane biogenesis; lipopolysaccharide biosynthesis. Its function is as follows. Activates KDO (a required 8-carbon sugar) for incorporation into bacterial lipopolysaccharide in Gram-negative bacteria. The protein is 3-deoxy-manno-octulosonate cytidylyltransferase of Rickettsia conorii (strain ATCC VR-613 / Malish 7).